We begin with the raw amino-acid sequence, 384 residues long: Probable fructokinase-6, chloroplastic (384 aa).

The transit peptide at 1–46 directs the protein to the chloroplast; sequence MALQATTTTFCFSGPTFRSTPHSLTSKRPISIKATTSSPSRLSNSR. The tract at residues 34–61 is disordered; it reads ATTSSPSRLSNSRSNLKGRALSSDGSTQ. Residues 35–48 show a composition bias toward low complexity; sequence TTSSPSRLSNSRSN.

This sequence belongs to the carbohydrate kinase PfkB family.

Its subcellular location is the plastid. It is found in the chloroplast. The enzyme catalyses D-fructose + ATP = D-fructose 6-phosphate + ADP + H(+). The protein operates within glycan biosynthesis; starch biosynthesis. Its function is as follows. May play an important role in maintaining the flux of carbon towards starch formation. The polypeptide is Probable fructokinase-6, chloroplastic (Arabidopsis thaliana (Mouse-ear cress)).